The following is a 270-amino-acid chain: UPF0354 protein BCG9842_B0431 (270 aa).

Belongs to the UPF0354 family.

The protein is UPF0354 protein BCG9842_B0431 of Bacillus cereus (strain G9842).